The primary structure comprises 81 residues: ESVTCKACEYVVKKVMELIDNNRTEEKIIHALDSVCALLPESVSEVCQEVVDTYGDSIVALLLQEMSPELVCSELGLCMSG.

Residues 1 to 81 (ESVTCKACEY…CSELGLCMSG (81 aa)) form the Saposin B-type domain. 3 disulfides stabilise this stretch: C5–C78, C8–C72, and C36–C47. The N-linked (GlcNAc...) asparagine glycan is linked to N22.

Functionally, saposin-A and saposin-C stimulate the hydrolysis of glucosylceramide by beta-glucosylceramidase (EC 3.2.1.45) and galactosylceramide by beta-galactosylceramidase (EC 3.2.1.46). Saposin-C apparently acts by combining with the enzyme and acidic lipid to form an activated complex, rather than by solubilizing the substrate. This Cavia porcellus (Guinea pig) protein is Saposin-C (PSAP).